Consider the following 247-residue polypeptide: Carboxy-S-adenosyl-L-methionine synthase (247 aa).

S-adenosyl-L-methionine contacts are provided by residues Y40, 65 to 67 (GSS), 90 to 91 (DN), 122 to 123 (DI), N137, and R204.

It belongs to the class I-like SAM-binding methyltransferase superfamily. Cx-SAM synthase family. Homodimer.

It carries out the reaction prephenate + S-adenosyl-L-methionine = carboxy-S-adenosyl-L-methionine + 3-phenylpyruvate + H2O. Its function is as follows. Catalyzes the conversion of S-adenosyl-L-methionine (SAM) to carboxy-S-adenosyl-L-methionine (Cx-SAM). The polypeptide is Carboxy-S-adenosyl-L-methionine synthase (Pseudomonas savastanoi pv. phaseolicola (strain 1448A / Race 6) (Pseudomonas syringae pv. phaseolicola (strain 1448A / Race 6))).